The primary structure comprises 415 residues: uncharacterized protein (415 aa).

Disordered stretches follow at residues 329-351 (KFNK…TESS) and 388-415 (KSMM…IITL). The span at 338 to 348 (LQNESGDDSET) shows a compositional bias: acidic residues. Positions 399-409 (KSNRKSNKRSN) are enriched in basic residues.

This is an uncharacterized protein from Acanthamoeba polyphaga mimivirus (APMV).